We begin with the raw amino-acid sequence, 770 residues long: Molybdenum cofactor sulfurase (770 aa).

At lysine 243 the chain carries N6-(pyridoxal phosphate)lysine. Residue cysteine 405 is part of the active site. The region spanning 611 to 769 (GDEVANWLCQ…LACGDPITVL (159 aa)) is the MOSC domain. Serine 726 carries the post-translational modification Phosphoserine.

It belongs to the class-V pyridoxal-phosphate-dependent aminotransferase family. MOCOS subfamily. The cofactor is pyridoxal 5'-phosphate.

The catalysed reaction is Mo-molybdopterin + L-cysteine + AH2 = thio-Mo-molybdopterin + L-alanine + A + H2O. It functions in the pathway cofactor biosynthesis; molybdopterin biosynthesis. In terms of biological role, sulfurates the molybdenum cofactor. Sulfation of molybdenum is essential for xanthine dehydrogenase (XDH) and aldehyde oxidase (ADO) enzymes in which molybdenum cofactor is liganded by 1 oxygen and 1 sulfur atom in active form. The protein is Molybdenum cofactor sulfurase of Drosophila grimshawi (Hawaiian fruit fly).